Reading from the N-terminus, the 633-residue chain is tRNA uridine 5-carboxymethylaminomethyl modification enzyme MnmG (633 aa).

Residues 15 to 20 (GAGHAG), V127, and S182 contribute to the FAD site. 276–290 (GPRYCPSIEDKIVRF) is a binding site for NAD(+). FAD is bound at residue Q373.

Belongs to the MnmG family. As to quaternary structure, homodimer. Heterotetramer of two MnmE and two MnmG subunits. FAD is required as a cofactor.

It localises to the cytoplasm. Its function is as follows. NAD-binding protein involved in the addition of a carboxymethylaminomethyl (cmnm) group at the wobble position (U34) of certain tRNAs, forming tRNA-cmnm(5)s(2)U34. The polypeptide is tRNA uridine 5-carboxymethylaminomethyl modification enzyme MnmG (Streptococcus thermophilus (strain CNRZ 1066)).